The chain runs to 512 residues: Glutathione-binding protein GsiB (512 aa).

Residues 1–26 (MARAVHRSGLVALGIATALMASCAFA) form the signal peptide.

This sequence belongs to the bacterial solute-binding protein 5 family. The complex is composed of two ATP-binding proteins (GsiA), two transmembrane proteins (GsiC and GsiD) and a solute-binding protein (GsiB).

The protein localises to the periplasm. In terms of biological role, part of the ABC transporter complex GsiABCD involved in glutathione import. Binds glutathione. The protein is Glutathione-binding protein GsiB of Escherichia coli O6:K15:H31 (strain 536 / UPEC).